The following is a 321-amino-acid chain: NADH-ubiquinone oxidoreductase chain 1 (321 aa).

The next 8 helical transmembrane spans lie at 9 to 29, 75 to 95, 106 to 126, 151 to 171, 177 to 197, 219 to 239, 256 to 276, and 297 to 317; these read ITNS…LTLL, ILFT…WAPM, LGLL…LWSG, TLGL…LMLF, HMWL…STLA, VEFS…NILF, PQLF…LFLW, and YLPL…ALCG.

This sequence belongs to the complex I subunit 1 family.

The protein resides in the mitochondrion inner membrane. The catalysed reaction is a ubiquinone + NADH + 5 H(+)(in) = a ubiquinol + NAD(+) + 4 H(+)(out). In terms of biological role, core subunit of the mitochondrial membrane respiratory chain NADH dehydrogenase (Complex I) that is believed to belong to the minimal assembly required for catalysis. Complex I functions in the transfer of electrons from NADH to the respiratory chain. The immediate electron acceptor for the enzyme is believed to be ubiquinone. The chain is NADH-ubiquinone oxidoreductase chain 1 (MT-ND1) from Lycodon semicarinatus (Ryukyu odd-tooth snake).